A 186-amino-acid chain; its full sequence is Probable nicotinate-nucleotide adenylyltransferase (186 aa).

Belongs to the NadD family.

The catalysed reaction is nicotinate beta-D-ribonucleotide + ATP + H(+) = deamido-NAD(+) + diphosphate. It functions in the pathway cofactor biosynthesis; NAD(+) biosynthesis; deamido-NAD(+) from nicotinate D-ribonucleotide: step 1/1. Functionally, catalyzes the reversible adenylation of nicotinate mononucleotide (NaMN) to nicotinic acid adenine dinucleotide (NaAD). In Thermus thermophilus (strain ATCC 27634 / DSM 579 / HB8), this protein is Probable nicotinate-nucleotide adenylyltransferase.